The primary structure comprises 356 residues: Putative aminopeptidase FrvX (356 aa).

Residues histidine 61 and aspartate 175 each coordinate a divalent metal cation. Glutamate 205 acts as the Proton acceptor in catalysis. The a divalent metal cation site is built by glutamate 206, aspartate 228, and histidine 316.

This sequence belongs to the peptidase M42 family. Requires a divalent metal cation as cofactor.

In Escherichia coli (strain K12), this protein is Putative aminopeptidase FrvX (frvX).